Reading from the N-terminus, the 704-residue chain is Elongation factor G (704 aa).

The tr-type G domain occupies 10–290 (NKVRNIGIMA…AVIDYLPSPL (281 aa)). Residues 19–26 (AHIDAGKT), 83–87 (DTPGH), and 137–140 (NKMD) contribute to the GTP site.

This sequence belongs to the TRAFAC class translation factor GTPase superfamily. Classic translation factor GTPase family. EF-G/EF-2 subfamily.

It is found in the cytoplasm. Its function is as follows. Catalyzes the GTP-dependent ribosomal translocation step during translation elongation. During this step, the ribosome changes from the pre-translocational (PRE) to the post-translocational (POST) state as the newly formed A-site-bound peptidyl-tRNA and P-site-bound deacylated tRNA move to the P and E sites, respectively. Catalyzes the coordinated movement of the two tRNA molecules, the mRNA and conformational changes in the ribosome. The protein is Elongation factor G of Clavibacter michiganensis subsp. michiganensis (strain NCPPB 382).